A 396-amino-acid polypeptide reads, in one-letter code: Sialyltransferase-like protein 2 (396 aa).

At 1 to 6 (MKRRHL) the chain is on the cytoplasmic side. A helical; Signal-anchor for type II membrane protein transmembrane segment spans residues 7–23 (PPVLVLLLLSILSLSFR). Topologically, residues 24-396 (RRLLVLQGPP…FTVPPVRLHR (373 aa)) are lumenal. N-linked (GlcNAc...) asparagine glycosylation is found at N72, N260, and N304.

The protein belongs to the glycosyltransferase 29 family.

It is found in the golgi apparatus membrane. Does not possess sialyltransferase-like activity in vitro. The polypeptide is Sialyltransferase-like protein 2 (Oryza sativa subsp. indica (Rice)).